The following is a 452-amino-acid chain: UDP-glycosyltransferase 76E4 (452 aa).

UDP-alpha-D-glucose contacts are provided by residues T274, 333-335, 350-358, and 372-375; these read APQ, HCGWNSTLE, and QGEQ.

This sequence belongs to the UDP-glycosyltransferase family.

This Arabidopsis thaliana (Mouse-ear cress) protein is UDP-glycosyltransferase 76E4 (UGT76E4).